Reading from the N-terminus, the 1385-residue chain is DNA-directed RNA polymerase subunit beta' (1385 aa).

Residues Cys72, Cys74, Cys87, and Cys90 each coordinate Zn(2+). Residues Asp463, Asp465, and Asp467 each contribute to the Mg(2+) site. Residues Cys813, Cys887, Cys894, and Cys897 each contribute to the Zn(2+) site.

The protein belongs to the RNA polymerase beta' chain family. In terms of assembly, the RNAP catalytic core consists of 2 alpha, 1 beta, 1 beta' and 1 omega subunit. When a sigma factor is associated with the core the holoenzyme is formed, which can initiate transcription. Requires Mg(2+) as cofactor. It depends on Zn(2+) as a cofactor.

It catalyses the reaction RNA(n) + a ribonucleoside 5'-triphosphate = RNA(n+1) + diphosphate. Functionally, DNA-dependent RNA polymerase catalyzes the transcription of DNA into RNA using the four ribonucleoside triphosphates as substrates. The polypeptide is DNA-directed RNA polymerase subunit beta' (Trichlorobacter lovleyi (strain ATCC BAA-1151 / DSM 17278 / SZ) (Geobacter lovleyi)).